The primary structure comprises 161 residues: 18.1 kDa class I heat shock protein (161 aa).

Positions 47–161 constitute a sHSP domain; it reads ETAAFAGARI…PDVKSIQVTG (115 aa).

It belongs to the small heat shock protein (HSP20) family. In terms of assembly, may form oligomeric structures.

Its subcellular location is the cytoplasm. The polypeptide is 18.1 kDa class I heat shock protein (HSP18.1) (Oryza sativa subsp. japonica (Rice)).